The chain runs to 325 residues: Elongation factor Ts, mitochondrial (325 aa).

The N-terminal 45 residues, 1–45 (MSLLRSLRVFLVARTGSYPAGSLLRQSPQPRHTFYAGPRLSASAS), are a transit peptide targeting the mitochondrion. N6-succinyllysine is present on residues Lys76, Lys133, and Lys192. Ser270 is modified (phosphoserine). Phosphothreonine is present on Thr324.

Belongs to the EF-Ts family. Expressed in all tissues, with the highest levels of expression in skeletal muscle, liver and kidney.

It is found in the mitochondrion. Its function is as follows. Associates with the EF-Tu.GDP complex and induces the exchange of GDP to GTP. It remains bound to the aminoacyl-tRNA.EF-Tu.GTP complex up to the GTP hydrolysis stage on the ribosome. The chain is Elongation factor Ts, mitochondrial from Homo sapiens (Human).